The sequence spans 325 residues: Phenylalanine--tRNA ligase alpha subunit (325 aa).

A Mg(2+)-binding site is contributed by Glu-251.

Belongs to the class-II aminoacyl-tRNA synthetase family. Phe-tRNA synthetase alpha subunit type 1 subfamily. Tetramer of two alpha and two beta subunits. Requires Mg(2+) as cofactor.

It is found in the cytoplasm. It carries out the reaction tRNA(Phe) + L-phenylalanine + ATP = L-phenylalanyl-tRNA(Phe) + AMP + diphosphate + H(+). The sequence is that of Phenylalanine--tRNA ligase alpha subunit from Thermotoga neapolitana (strain ATCC 49049 / DSM 4359 / NBRC 107923 / NS-E).